The following is a 173-amino-acid chain: PRKR-interacting protein 1 homolog (173 aa).

Disordered stretches follow at residues 1 to 27 and 115 to 173; these read MAAETGTAKPARAKKEPQPLVIPKNAT and NKKL…LEDQ. A required for RNA-binding region spans residues 50–142; sequence RPKEWSPRSA…LKEKKKMAKM (93 aa). The stretch at 99-161 forms a coiled coil; that stretch reads SEKHNLDDDF…IEKHVELDNS (63 aa). The span at 124 to 142 shows a compositional bias: basic residues; that stretch reads AKRRLKRQKLKEKKKMAKM. Positions 125–137 are required for nuclear localization; the sequence is KRRLKRQKLKEKK. Over residues 143–173 the composition is skewed to basic and acidic residues; it reads AKKEEKKEEIEKHVELDNSPESSDKSDLEDQ.

The protein belongs to the PRKRIP1 family. In terms of assembly, component of the pre-catalytic and post-catalytic spliceosome complexes.

It is found in the nucleus. The protein localises to the nucleolus. In terms of biological role, required for pre-mRNA splicing as component of the spliceosome. Binds double-stranded RNA. The protein is PRKR-interacting protein 1 homolog (prkrip1) of Xenopus tropicalis (Western clawed frog).